Reading from the N-terminus, the 294-residue chain is UDP-3-O-acyl-N-acetylglucosamine deacetylase (294 aa).

His75, His232, and Asp236 together coordinate Zn(2+). His259 functions as the Proton donor in the catalytic mechanism.

The protein belongs to the LpxC family. Requires Zn(2+) as cofactor.

The enzyme catalyses a UDP-3-O-[(3R)-3-hydroxyacyl]-N-acetyl-alpha-D-glucosamine + H2O = a UDP-3-O-[(3R)-3-hydroxyacyl]-alpha-D-glucosamine + acetate. Its pathway is glycolipid biosynthesis; lipid IV(A) biosynthesis; lipid IV(A) from (3R)-3-hydroxytetradecanoyl-[acyl-carrier-protein] and UDP-N-acetyl-alpha-D-glucosamine: step 2/6. Functionally, catalyzes the hydrolysis of UDP-3-O-myristoyl-N-acetylglucosamine to form UDP-3-O-myristoylglucosamine and acetate, the committed step in lipid A biosynthesis. The sequence is that of UDP-3-O-acyl-N-acetylglucosamine deacetylase from Campylobacter lari (strain RM2100 / D67 / ATCC BAA-1060).